A 912-amino-acid polypeptide reads, in one-letter code: WD repeat-containing protein 44 (912 aa).

Over residues 1–14 the composition is skewed to acidic residues; it reads MASESDTEEFFDAP. Residues 1-25 form a disordered region; that stretch reads MASESDTEEFFDAPEDVHLEGGDPI. Ala2 bears the N-acetylalanine mark. The segment at 2–170 is binding activity; that stretch reads ASESDTEEFF…SSTAQLNVPE (169 aa). A Phosphoserine modification is found at Ser3. Positions 9–15 match the FFAT-like motif motif; the sequence is EFFDAPE. Phosphoserine occurs at positions 50, 66, 71, 81, 96, and 126. 2 disordered regions span residues 79–104 and 118–152; these read DDSL…GTEL and QEDS…KPVD. Residues 89–104 are compositionally biased toward polar residues; it reads QSDQATASPVTAGTEL. Thr158 is modified (phosphothreonine). Disordered stretches follow at residues 183-202, 207-279, 318-349, 396-422, and 457-479; these read VKES…TKDF, EVAP…PKEN, QENG…ELTD, SNDA…RLKQ, and RDEV…MPYT. The tract at residues 210-256 is important for interaction with ARHGAP26 AND ARHGAP10; the sequence is PAKPPRQLTPEPDIVASTKKPVPARPPPPANFPPPRPPPPSRPAPPP. The residue at position 218 (Thr218) is a Phosphothreonine. Pro residues predominate over residues 232-255; the sequence is PARPPPPANFPPPRPPPPSRPAPP. At Ser261 the chain carries Phosphoserine. Basic and acidic residues predominate over residues 261-277; that stretch reads SELEFEALKTPDLDVPK. Thr270 is subject to Phosphothreonine. Residues 333–346 are important for interaction with RAB11A; that stretch reads VMGPQRPRSNSGRE. Residues 334 to 504 form an interaction with RAB11 region; that stretch reads MGPQRPRSNS…DFDQIKVVQD (171 aa). A phosphoserine mark is found at Ser341 and Ser343. Thr348 bears the Phosphothreonine mark. Ser402, Ser469, Ser470, and Ser471 each carry phosphoserine. Residues 466-475 show a composition bias toward acidic residues; sequence DDPSSSDDEG. Tyr478 carries the post-translational modification Phosphotyrosine. A WD 1 repeat occupies 508-547; that stretch reads EHMGAVWTMKFSHCGRLLASAGQDNVVRIWALKNAFDYFN. The tract at residues 556–592 is disordered; that stretch reads EGRVSPSPSQESLNSSKSDTDTGVCSGTDEDPDDKNA. Phosphoserine occurs at positions 560 and 564. The span at 560–572 shows a compositional bias: low complexity; the sequence is SPSPSQESLNSSK. WD repeat units follow at residues 604-642, 644-684, 689-728, 739-778, 783-822, and 871-912; these read GHTA…CLCC, QHID…VALW, GQTK…YHTQ, KVGR…LSMK, VNSS…SKFT, and EDAE…KNLS.

In terms of assembly, interacts with the GTP-bound form of RAB11A when membrane-associated. Interacts with GRAF1/ARHGAP26 or GRAF2/ARHGAP10; the interaction connects the endoplasmic reticulum (ER) with the endosomal tubule. Interacts (via FFAT-like motif) with VAPA (via MSP domain) or VAPB (via MSP domain); the interaction connects the ER with the endosomal tubule. Does not bind to other Rab and Rho small G proteins. In terms of processing, phosphorylated by ATK1; the phosphorylation stabilizes its interaction with RAB11A and RAB11B. As to expression, highly expressed in brain.

It is found in the cytoplasm. The protein resides in the cytosol. Its subcellular location is the perinuclear region. The protein localises to the endosome membrane. It localises to the golgi apparatus. It is found in the trans-Golgi network. Functionally, downstream effector for Rab11 which regulates Rab11 intracellular membrane trafficking functions such as endocytic recycling, intracellular ciliogenesis and protein export. ATK1-mediated phosphorylation of WDR44 induces binding to Rab11 which activates endocytic recycling of transferrin receptor back to the plasma membrane. When bound to Rab11, prevents the formation of the ciliogenic Rab11-Rabin8/RAB3IP-RAB11FIP3 complex, therefore inhibiting preciliary trafficking and ciliogenesis. Participates in neo-synthesized protein export by connecting the endoplasmic reticulum (ER) with the endosomal tubule via direct interactions with the integral ER proteins VAPA or VAPB and the endosomal protein GRAFs (GRAF1/ARHGAP26 or GRAF2/ARHGAP10), which facilitates the transfer of proteins such as E-cadherin, MPP14 and CFTR into a Rab8-Rab10-Rab11-dependent export route. The chain is WD repeat-containing protein 44 (WDR44) from Bos taurus (Bovine).